Consider the following 670-residue polypeptide: NADH-ubiquinone oxidoreductase chain 5 (670 aa).

A run of 19 helical transmembrane segments spans residues 1–21 (MYIV…IFGH), 31–51 (IAVG…YEIL), 81–101 (LTSI…LYSM), 111–131 (TRFF…VTAD), 133–153 (FVQL…LINF), 178–198 (LFFG…SVIF), 211–231 (LLGY…IGVV), 251–271 (TPVS…FLVL), 283–303 (ILNI…TIGI), 311–331 (VIAY…GLLN), 339–359 (LTTH…VIHG), 375–395 (LMPL…GFPF), 421–441 (AIIG…LLIL), 462–482 (TNMV…GYVT), 519–539 (LLPL…YFNI), 566–586 (FDFL…YDVM), 594–614 (LWEK…FTAL), 629–649 (IVQT…TGFI), and 650–670 (YMEL…IKID).

The protein belongs to the complex I subunit 5 family.

Its subcellular location is the mitochondrion inner membrane. It carries out the reaction a ubiquinone + NADH + 5 H(+)(in) = a ubiquinol + NAD(+) + 4 H(+)(out). In terms of biological role, core subunit of the mitochondrial membrane respiratory chain NADH dehydrogenase (Complex I) that is believed to belong to the minimal assembly required for catalysis. Complex I functions in the transfer of electrons from NADH to the respiratory chain. The immediate electron acceptor for the enzyme is believed to be ubiquinone. The protein is NADH-ubiquinone oxidoreductase chain 5 (nad5) of Dictyostelium discoideum (Social amoeba).